The following is a 377-amino-acid chain: Nitric oxide reductase FlRd-NAD(+) reductase (377 aa).

This sequence belongs to the FAD-dependent oxidoreductase family. Requires FAD as cofactor.

It is found in the cytoplasm. It carries out the reaction 2 reduced [nitric oxide reductase rubredoxin domain] + NAD(+) + H(+) = 2 oxidized [nitric oxide reductase rubredoxin domain] + NADH. The protein operates within nitrogen metabolism; nitric oxide reduction. Functionally, one of at least two accessory proteins for anaerobic nitric oxide (NO) reductase. Reduces the rubredoxin moiety of NO reductase. This Shigella flexneri serotype 5b (strain 8401) protein is Nitric oxide reductase FlRd-NAD(+) reductase.